Here is a 535-residue protein sequence, read N- to C-terminus: MAKKVAVIGAGVSGLISLKCCVDEGLEPTCFERTEDIGGVWRFKEKVEDGRASIYQSVVTNTSKEMSCFSDFPMPEDFPNFLHNSKLLEYFRIFAKKFDLLKYIQFQTTVLSVRKCPDFSSSGQWKVVTQSNGKEQSAVFDAVMVCTGHHFLPHIPLKSFPGIERFKGQYFHSRQYKHPDGFEGKRILVIGMGNSGSDIAVELSKSAAQVFISTRHGTWVMSRVSEDGYPWDSVFHTRFRSMLRNVLPRTVVKWMIEQQMNQWFNHENYGLEPQNKYIMKEPVLNDDVPSRLLCGAIKVKSTVKELTETSAIFEDGTVEENIDVIIFATGYSFSFPFLEDSLVKVENNMVSLYKYIFPAHLEKSTFACIGLIQPLGSIFPTAELQARWVTRVFKGLCHLPSERTMMMDIIKRNEKRIDLFGESQSQTLQTNYVDYLDELALEIGAKPDFCSLLFKDPKLAVRLFFGPCNSYQYRLAGPGQWEGARSAIFTQKQRILKPLKTRVLKDSSNFPVSFLLKILGLVAVVVAFFCQLQWS.

Ala2 bears the N-acetylalanine mark. FAD-binding positions include 9–13, Glu32, 40–41, and 61–62; these read GAGVS, VW, and NT. NADP(+)-binding positions include 60 to 61 and 195 to 198; these read TN and SGSD. Lys492 is covalently cross-linked (Glycyl lysine isopeptide (Lys-Gly) (interchain with G-Cter in SUMO)). Residues 510–530 traverse the membrane as a helical segment; it reads FPVSFLLKILGLVAVVVAFFC.

Belongs to the FMO family. The cofactor is FAD. Mg(2+) serves as cofactor.

The protein resides in the microsome membrane. Its subcellular location is the endoplasmic reticulum membrane. It carries out the reaction N,N-dimethylaniline + NADPH + O2 + H(+) = N,N-dimethylaniline N-oxide + NADP(+) + H2O. Functionally, catalyzes the oxidative metabolism of numerous xenobiotics, including mainly therapeutic drugs and insecticides that contain a soft nucleophile, most commonly nitrogen and sulfur and participates to their bioactivation. The polypeptide is Dimethylaniline monooxygenase [N-oxide-forming] 2 (Macaca mulatta (Rhesus macaque)).